The sequence spans 142 residues: MKYLILLAVLGTAFAQRNGFCRLPADEGICKALIPRFYFNTETGKCTMFSYGGCGGNENNFETIEDCQKACGAPERVSDFEGADFKTGCEPAADSGSCAGQLERWFYNVRSGECETFVYGGCGGNDNNYESEEECELVCKNM.

An N-terminal signal peptide occupies residues 1–15 (MKYLILLAVLGTAFA). A Pyrrolidone carboxylic acid modification is found at Gln-16. 2 BPTI/Kunitz inhibitor domains span residues 21-71 (CRLP…QKAC) and 89-139 (CEPA…ELVC). Intrachain disulfides connect Cys-21/Cys-71, Cys-30/Cys-54, Cys-46/Cys-67, Cys-89/Cys-139, Cys-98/Cys-122, and Cys-114/Cys-135.

Interacts with host thrombin and trypsin. Post-translationally, the N-terminus is blocked. As to expression, expressed in the midgut.

It localises to the secreted. Midgut thrombin inhibitor that plays a major role in keeping the midgut microenvironment at low hemostatic and inflammatory tonus. Also inhibits FXIa (F11), kallikrein (KLK1), neutrophil elastase (ELANE) and cathepsin G (CTSG), which play a role in the contact pathway of the coagulation cascade. Also abrogates platelet aggregation by cathepsin G and plasmin, and attenuates tissue factor (F3) pathway inhibitor cleavage by elastase. In vivo, inhibits thrombosis and promotes bleeding in mice. In Rhipicephalus microplus (Cattle tick), this protein is Boophilin-G2.